Consider the following 411-residue polypeptide: MSGASSVSSICSSNVSLIPTGPQVFINFRGKDLRKGFMSFLKPALKKEKINVFIDEQEERGKYLISLFDTIGESKIALVIFSEGYCESHWCMDELVKIKEYMDQNRLIIIPIFYRLDLDVVKDLTGKFGDNFWDLVDKYQPEPKKLHKWTEALFSVCELFSLILPKHSDISDRDFVKSIVKAVKKVQKNFFQRRNGEIEYQDFSVPACKLTITMHESPNEEAVQVTVLNEFYQMKNQSPVPSYEFKFWVDLTRPKGNVFMIDARDLSIAWSEDSNHWTWLPLPNQNSNESVMEIAFLKSASWLDVAGKFDTRYLTPRTRYEVVFVVKLEYTFEWETLVKLKLDLPNTWEKPQEQSVDMFDYISDQWLDIPVGEFTTSKKNVGEISFAMYEHECQLWKSGLFVKGVTIRPKY.

Residues 20–157 enclose the TIR domain; it reads TGPQVFINFR…KWTEALFSVC (138 aa). Glu94 is an active-site residue.

It catalyses the reaction NAD(+) + H2O = ADP-D-ribose + nicotinamide + H(+). The polypeptide is Protein PHLOEM PROTEIN 2-LIKE A5 (PP2A5) (Arabidopsis thaliana (Mouse-ear cress)).